The chain runs to 370 residues: Gametogenetin-binding protein 1 (370 aa).

2 disordered regions span residues 26–114 (VGSK…QTLT) and 240–263 (PAAPQLALKDGLPHEEKGEREEAV). Residues 31–49 (GSKSTNKPLTRSQPSSSWE) show a composition bias toward polar residues. The segment at 225 to 370 (LYKQLQKSAM…DEMGNWPPPD (146 aa)) is required for induction of mitochondrial fragmentation. The span at 250-260 (GLPHEEKGERE) shows a compositional bias: basic and acidic residues. Positions 298 to 370 (KKFRSTDTVG…DEMGNWPPPD (73 aa)) are interaction with GGN.

Interacts with CCDC159. Interacts with isoform 1 and isoform 2 of GGN. In terms of tissue distribution, testis-specific. In the testis, expressed only in germ cells and not in somatic cells. Expression starts in late primary spermatocytes in stage X-XII tubules and gradually increases towards step 1-3 spermatids in stage I-III tubules. Expression then declines continuously and disappears after step 7 spermatids in stage VII tubules (at protein level).

The protein localises to the cytoplasm. The protein resides in the membrane. Its subcellular location is the golgi apparatus. It localises to the mitochondrion intermembrane space. Functionally, induces mitochondrial fragmentation, possibly by promoting DNM1L-dependent fission and may play a role in mitochondrial morphogenesis during spermatogenesis. The sequence is that of Gametogenetin-binding protein 1 (Ggnbp1) from Mus musculus (Mouse).